The primary structure comprises 289 residues: Bifunctional protein FolD (289 aa).

NADP(+) is bound by residues 165 to 167 (GAS) and S190.

The protein belongs to the tetrahydrofolate dehydrogenase/cyclohydrolase family. Homodimer.

The catalysed reaction is (6R)-5,10-methylene-5,6,7,8-tetrahydrofolate + NADP(+) = (6R)-5,10-methenyltetrahydrofolate + NADPH. The enzyme catalyses (6R)-5,10-methenyltetrahydrofolate + H2O = (6R)-10-formyltetrahydrofolate + H(+). The protein operates within one-carbon metabolism; tetrahydrofolate interconversion. Catalyzes the oxidation of 5,10-methylenetetrahydrofolate to 5,10-methenyltetrahydrofolate and then the hydrolysis of 5,10-methenyltetrahydrofolate to 10-formyltetrahydrofolate. The protein is Bifunctional protein FolD of Ralstonia nicotianae (strain ATCC BAA-1114 / GMI1000) (Ralstonia solanacearum).